A 186-amino-acid polypeptide reads, in one-letter code: Dual-action ribosomal maturation protein DarP (186 aa).

Belongs to the DarP family.

The protein localises to the cytoplasm. Functionally, member of a network of 50S ribosomal subunit biogenesis factors which assembles along the 30S-50S interface, preventing incorrect 23S rRNA structures from forming. Promotes peptidyl transferase center (PTC) maturation. This is Dual-action ribosomal maturation protein DarP from Proteus mirabilis (strain HI4320).